We begin with the raw amino-acid sequence, 339 residues long: Phenylalanine--tRNA ligase alpha subunit (339 aa).

E253 contributes to the Mg(2+) binding site.

The protein belongs to the class-II aminoacyl-tRNA synthetase family. Phe-tRNA synthetase alpha subunit type 1 subfamily. Tetramer of two alpha and two beta subunits. Mg(2+) serves as cofactor.

The protein localises to the cytoplasm. The catalysed reaction is tRNA(Phe) + L-phenylalanine + ATP = L-phenylalanyl-tRNA(Phe) + AMP + diphosphate + H(+). The protein is Phenylalanine--tRNA ligase alpha subunit of Geobacter sulfurreducens (strain ATCC 51573 / DSM 12127 / PCA).